A 40-amino-acid chain; its full sequence is Photosystem II reaction center protein J (40 aa).

The helical transmembrane segment at 8 to 28 (IPLWIIGTVAGIVVIGLIGLF) threads the bilayer.

It belongs to the PsbJ family. PSII is composed of 1 copy each of membrane proteins PsbA, PsbB, PsbC, PsbD, PsbE, PsbF, PsbH, PsbI, PsbJ, PsbK, PsbL, PsbM, PsbT, PsbX, PsbY, PsbZ, Psb30/Ycf12, at least 3 peripheral proteins of the oxygen-evolving complex and a large number of cofactors. It forms dimeric complexes.

It is found in the plastid. The protein localises to the chloroplast thylakoid membrane. One of the components of the core complex of photosystem II (PSII). PSII is a light-driven water:plastoquinone oxidoreductase that uses light energy to abstract electrons from H(2)O, generating O(2) and a proton gradient subsequently used for ATP formation. It consists of a core antenna complex that captures photons, and an electron transfer chain that converts photonic excitation into a charge separation. The sequence is that of Photosystem II reaction center protein J from Pisum sativum (Garden pea).